The following is a 335-amino-acid chain: Olfactory receptor 10R2 (335 aa).

Residues 1–45 (MPQILIFTYLNMFYFFPPLQILAENLTMVTEFLLLGFSSLGEIQL) lie on the Extracellular side of the membrane. N-linked (GlcNAc...) asparagine glycosylation is present at asparagine 25. A helical membrane pass occupies residues 46 to 66 (ALFVVFLFLYLVILSGNVTII). The Cytoplasmic segment spans residues 67–74 (SVIHLDKS). A helical membrane pass occupies residues 75–95 (LHTPMYFFLGILSTSETFYTF). Residues 96-119 (VILPKMLINLLSVARTISFNCCAL) are Extracellular-facing. A disulfide bridge connects residues cysteine 117 and cysteine 209. A helical membrane pass occupies residues 120–140 (QMFFFLGFAITNCLLLGVMGY). Topologically, residues 141–159 (DRYAAICHPLHYPTLMSWQ) are cytoplasmic. The helical transmembrane segment at 160–180 (VCGKLAAACAIGGFLASLTVV) threads the bilayer. The Extracellular segment spans residues 181-217 (NLVFSLPFCSANKVNHYFCDISAVILLACTNTDVNEF). A helical transmembrane segment spans residues 218 to 237 (VIFICGVLVLVVPFLFICVS). Residues 238-257 (YLCILRTILKIPSAEGRRKA) lie on the Cytoplasmic side of the membrane. Residues 258-278 (FSTCASHLSVVIVHYGCASFI) form a helical membrane-spanning segment. Topologically, residues 279–291 (YLRPTANYVSNKD) are extracellular. The helical transmembrane segment at 292-312 (RLVTVTYTIVTPLLNPMVYSL) threads the bilayer. The Cytoplasmic segment spans residues 313–335 (RNKDVQLAIRKVLGKKGSLKLYN).

This sequence belongs to the G-protein coupled receptor 1 family.

It is found in the cell membrane. Its function is as follows. Odorant receptor. This Homo sapiens (Human) protein is Olfactory receptor 10R2 (OR10R2).